The primary structure comprises 486 residues: Adenosylhomocysteinase (486 aa).

3 residues coordinate substrate: Thr63, Asp147, and Glu209. NAD(+) is bound at residue 210-212 (TTT). Positions 239 and 243 each coordinate substrate. NAD(+) is bound by residues Asn244, 273-278 (GYGDVG), Glu296, Asn331, 352-354 (IGH), and Asn400.

Belongs to the adenosylhomocysteinase family. NAD(+) is required as a cofactor.

It carries out the reaction S-adenosyl-L-homocysteine + H2O = L-homocysteine + adenosine. Its pathway is amino-acid biosynthesis; L-homocysteine biosynthesis; L-homocysteine from S-adenosyl-L-homocysteine: step 1/1. Adenosylhomocysteine is a competitive inhibitor of S-adenosyl-L-methionine-dependent methyl transferase reactions; therefore adenosylhomocysteinase may play a key role in the control of methylations via regulation of the intracellular concentration of adenosylhomocysteine. The protein is Adenosylhomocysteinase of Trichomonas vaginalis.